Here is a 362-residue protein sequence, read N- to C-terminus: Sulfate/thiosulfate import ATP-binding protein CysA (362 aa).

An ABC transporter domain is found at 3 to 237; the sequence is IEIHDLSKQF…PANPFVYEFL (235 aa). 35–42 provides a ligand contact to ATP; that stretch reads GPSGSGKT.

The protein belongs to the ABC transporter superfamily. Sulfate/tungstate importer (TC 3.A.1.6) family. As to quaternary structure, the complex is composed of two ATP-binding proteins (CysA), two transmembrane proteins (CysT and CysW) and a solute-binding protein (CysP).

It localises to the cell inner membrane. The catalysed reaction is sulfate(out) + ATP + H2O = sulfate(in) + ADP + phosphate + H(+). It carries out the reaction thiosulfate(out) + ATP + H2O = thiosulfate(in) + ADP + phosphate + H(+). Its function is as follows. Part of the ABC transporter complex CysAWTP involved in sulfate/thiosulfate import. Responsible for energy coupling to the transport system. This is Sulfate/thiosulfate import ATP-binding protein CysA from Nitrosomonas europaea (strain ATCC 19718 / CIP 103999 / KCTC 2705 / NBRC 14298).